We begin with the raw amino-acid sequence, 2061 residues long: Myoferlin (2061 aa).

In terms of domain architecture, C2 1 spans 1-101; sequence MLRVIVESAS…TGDQSRSLPY (101 aa). Topologically, residues 1–2025 are cytoplasmic; the sequence is MLRVIVESAS…MKFIVWRRFK (2025 aa). Residues 123–172 form a disordered region; that stretch reads GYDPPSAPHPNDLSGPSVPGMGGDGEEDEGDEDRLDNAVRGPGPKGPVGT. Positions 146 to 156 are enriched in acidic residues; the sequence is DGEEDEGDEDR. S174 is subject to Phosphoserine. 2 C2 domains span residues 181-300 and 339-474; these read RLTK…RKWL and DSDD…VEDF. The interval 186-281 is necessary for interaction with EHD2; that stretch reads KNSRRMLSNK…RADCLMGEFK (96 aa). Residues 323–342 are disordered; that stretch reads LGTGDEPPPERRDRDNDSDD. D390, D396, D444, D446, and D452 together coordinate Ca(2+). K553 bears the N6-acetyllysine mark. S729 carries the post-translational modification Phosphoserine. K884 carries the N6-acetyllysine modification. The tract at residues 938-967 is disordered; the sequence is ESRYPGGDWKPAEDTYTDANGDKAASPSEL. 2 consecutive C2 domains span residues 1123 to 1251 and 1282 to 1410; these read GANT…LLWH and LPPQ…GKED. 4 residues coordinate Ca(2+): D1155, D1161, D1217, and D1219. K1507 is subject to N6-acetyllysine. C2 domains are found at residues 1536 to 1654 and 1772 to 1920; these read PAPP…SHCG and GPPG…EKCR. Ca(2+) contacts are provided by D1569, D1575, D1624, D1626, D1891, S1894, and D1897. S1915 carries the phosphoserine modification. Residues 2026 to 2046 traverse the membrane as a helical segment; that stretch reads WVIIGLLFLLILLLFVAVLLY. Over 2047-2061 the chain is Extracellular; that stretch reads SLPNYLSMKIVKPNV.

The protein belongs to the ferlin family. As to quaternary structure, interacts with DNM2 and KDR. Interacts with EHD1. Interacts with EHD2; the interaction is direct. Interacts with RIPOR2. It depends on Ca(2+) as a cofactor. As to expression, expressed in myoblast and endothelial cells (at protein level). Highly expressed in cardiac and skeletal muscles. Also present in lung, and at very low levels in kidney, placenta and brain.

The protein localises to the cell membrane. The protein resides in the nucleus membrane. Its subcellular location is the cytoplasmic vesicle membrane. In terms of biological role, calcium/phospholipid-binding protein that plays a role in the plasmalemma repair mechanism of endothelial cells that permits rapid resealing of membranes disrupted by mechanical stress. Involved in endocytic recycling. Implicated in VEGF signal transduction by regulating the levels of the receptor KDR. The sequence is that of Myoferlin (MYOF) from Homo sapiens (Human).